Here is a 1035-residue protein sequence, read N- to C-terminus: MGGCEVREFLLQFGFFLPLLTAWTGDCSHVSNQVVLLDTTTVMGELGWKTYPLNGWDAITEMDEHNRPIHTYQVCNVMEPNQNNWLRTNWISRDAAQKIYVEMKFTLRDCNSIPWVLGTCKETFNLYYIESDESHGTKFKPSQYIKIDTIAADESFTQMDLGDRILKLNTEIREVGPIERKGFYLAFQDIGACIALVSVRVFYKKCPFTVRNLAMFPDTIPRVDSSSLVEVRGSCVKSAEERDTPKLYCGADGDWLVPLGRCICSTGYEEIEGSCHACRPGFYKAFAGNTKCSKCPPHSSTYVEATSVCHCEKGYFRAEKDPPSMACTRPPSAPRNVAFNINETALILEWSPPSDTGGRKDLTYSVICKKCGLDTTQCEDCGGGLRFIPRHTGLINNSVVVLDFVSHVNYTFEIEAMNGVSELSISPKPFTAITVTTDHDAPSLIGMMRKDWASQNSLALSWQAPAFSNGAILDYEIKYYEKEHEQLTYSSTRSKAPSVIVTGLKPATTYIFHIRVRTATGYSGYSQKFEFETGDETSDMAAEQGQILVIATAAVGGFTLLVILTLFFLITGRCQWYIKAKMKSEEKRRTHLQNGHLRFPGIKTYIDPDTYEDPSLAVHEFAKEIDPSRIRIERVIGAGEFGEVCSGRLKTPGKREIPVAIKTLKGGHMDRQRRDFLREASIMGQFDHPNIIRLEGVVTKRSFPAIGVEAFCPSFLRAGFLNGIQAPHPVTAGGSLPPRIPAGRPVMIVVEYMENGSLDSFLRKHDGHFTVIQLVGMLRGIASGMKYLSDMGYVHRDLAARNILVNSNLVCKVSDFGLSRVLEDDPEAAYTTTGGKIPIRWTAPEAIAYRKFSSASDAWSYGIVMWEVMSYGERPYWEMSNQDVILSIEEGYRLPAPMGCPPSLHQLMLHCWQKERNHRPKFTDIVSFLDKLIRNPSALHTLVEDILVMPESPGDVPEYPLFVTVGDWLDSIKMGQYKSNFMAAGFTTFDLISRMSIDDIRRIGVILIGHQRRIVSSIQTLRLHMMHIQEKGFHV.

The N-terminal stretch at 1–22 (MGGCEVREFLLQFGFFLPLLTA) is a signal peptide. Residues 23-549 (WTGDCSHVSN…MAAEQGQILV (527 aa)) are Extracellular-facing. Residues 33-211 (QVVLLDTTTV…FYKKCPFTVR (179 aa)) enclose the Eph LBD domain. Fibronectin type-III domains lie at 330–440 (PPSA…TDHD) and 441–536 (APSL…TGDE). Residues N342, N396, and N409 are each glycosylated (N-linked (GlcNAc...) asparagine). The helical transmembrane segment at 550–570 (IATAAVGGFTLLVILTLFFLI) threads the bilayer. Over 571–1035 (TGRCQWYIKA…MHIQEKGFHV (465 aa)) the chain is Cytoplasmic. Phosphotyrosine; by autocatalysis occurs at positions 605 and 611. Residues 630–943 (IRIERVIGAG…RNPSALHTLV (314 aa)) enclose the Protein kinase domain. ATP is bound by residues 636–644 (IGAGEFGEV) and K662. Residue D797 is the Proton acceptor of the active site. Y830 and Y977 each carry phosphotyrosine; by autocatalysis. One can recognise an SAM domain in the interval 960–1024 (PLFVTVGDWL…VSSIQTLRLH (65 aa)). Positions 1033–1035 (FHV) match the PDZ-binding motif.

Belongs to the protein kinase superfamily. Tyr protein kinase family. Ephrin receptor subfamily. As to quaternary structure, heterotetramer upon binding of the ligand. The heterotetramer is composed of an ephrin dimer and a receptor dimer. Oligomerization is probably required to induce biological responses. Interacts (via SAM domain) with ANKS1A (via SAM domain).

It localises to the membrane. It carries out the reaction L-tyrosyl-[protein] + ATP = O-phospho-L-tyrosyl-[protein] + ADP + H(+). In terms of biological role, receptor tyrosine kinase which binds promiscuously GPI-anchored ephrin-A family ligands residing on adjacent cells, leading to contact-dependent bidirectional signaling into neighboring cells. The signaling pathway downstream of the receptor is referred to as forward signaling while the signaling pathway downstream of the ephrin ligand is referred to as reverse signaling. This Mus musculus (Mouse) protein is Ephrin type-A receptor 6 (Epha6).